A 152-amino-acid chain; its full sequence is Arginine repressor (152 aa).

It belongs to the ArgR family.

Its subcellular location is the cytoplasm. It participates in amino-acid biosynthesis; L-arginine biosynthesis [regulation]. Its function is as follows. Regulates arginine biosynthesis genes. This chain is Arginine repressor, found in Caldicellulosiruptor bescii (strain ATCC BAA-1888 / DSM 6725 / KCTC 15123 / Z-1320) (Anaerocellum thermophilum).